Reading from the N-terminus, the 71-residue chain is Exodeoxyribonuclease 7 small subunit (71 aa).

It belongs to the XseB family. As to quaternary structure, heterooligomer composed of large and small subunits.

It is found in the cytoplasm. It carries out the reaction Exonucleolytic cleavage in either 5'- to 3'- or 3'- to 5'-direction to yield nucleoside 5'-phosphates.. Functionally, bidirectionally degrades single-stranded DNA into large acid-insoluble oligonucleotides, which are then degraded further into small acid-soluble oligonucleotides. This chain is Exodeoxyribonuclease 7 small subunit, found in Clostridium botulinum (strain Kyoto / Type A2).